A 155-amino-acid polypeptide reads, in one-letter code: MPVVLDTPVAVRRTAMDLLARREHGRVELTRKLRQRGAPPELIDAALDRLVEEGLLSESRYLESFVSYRARSGYGPVRIREELNQRGLQRADIEQALRECGIDWQEKLHELWQRKFAGALPVDARERARQGRFLSYRGYPLDMIGRLLSGRGGDD.

It belongs to the RecX family.

It is found in the cytoplasm. Modulates RecA activity. This chain is Regulatory protein RecX, found in Pseudomonas savastanoi pv. phaseolicola (strain 1448A / Race 6) (Pseudomonas syringae pv. phaseolicola (strain 1448A / Race 6)).